A 176-amino-acid polypeptide reads, in one-letter code: Prepronociceptin (176 aa).

The signal sequence occupies residues 1–19 (MKVLLCDLLLLSLFSSVFS). Propeptides lie at residues 20–95 (SCQR…MQHL) and 169–176 (TLHQNGNV).

The protein belongs to the opioid neuropeptide precursor family. In terms of processing, specific enzymatic cleavages at paired basic residues probably yield other active peptides besides nociceptin. Post-translationally, the N-terminal domain contains 6 conserved cysteines thought to be involved in disulfide bonding and/or processing. As to expression, predominantly expressed in the brain and spinal cord. Also expressed and secreted by peripheral blood neutrophils following degranulation.

The protein localises to the secreted. Ligand of the opioid receptor-like receptor OPRL1. It may act as a transmitter in the brain by modulating nociceptive and locomotor behavior. May be involved in neuronal differentiation and development. In terms of biological role, blocks nociceptin action in pain transmission by inhibiting nociceptin-induced hyperalgesia and allodynia. Functionally, has potent analgesic activity. The sequence is that of Prepronociceptin (PNOC) from Homo sapiens (Human).